A 277-amino-acid chain; its full sequence is NADPH-dependent 7-cyano-7-deazaguanine reductase (277 aa).

83-85 (IES) lines the substrate pocket. 85–86 (SK) lines the NADPH pocket. The active-site Thioimide intermediate is C184. Catalysis depends on D191, which acts as the Proton donor. 223–224 (HE) is a substrate binding site. 252–253 (RG) provides a ligand contact to NADPH.

The protein belongs to the GTP cyclohydrolase I family. QueF type 2 subfamily. In terms of assembly, homodimer.

It localises to the cytoplasm. The enzyme catalyses 7-aminomethyl-7-carbaguanine + 2 NADP(+) = 7-cyano-7-deazaguanine + 2 NADPH + 3 H(+). It functions in the pathway tRNA modification; tRNA-queuosine biosynthesis. Catalyzes the NADPH-dependent reduction of 7-cyano-7-deazaguanine (preQ0) to 7-aminomethyl-7-deazaguanine (preQ1). This is NADPH-dependent 7-cyano-7-deazaguanine reductase from Cupriavidus necator (strain ATCC 17699 / DSM 428 / KCTC 22496 / NCIMB 10442 / H16 / Stanier 337) (Ralstonia eutropha).